An 84-amino-acid chain; its full sequence is UPF0291 protein EUBELI_00985 (84 aa).

This sequence belongs to the UPF0291 family.

The protein resides in the cytoplasm. In Lachnospira eligens (strain ATCC 27750 / DSM 3376 / VPI C15-48 / C15-B4) (Eubacterium eligens), this protein is UPF0291 protein EUBELI_00985.